The sequence spans 107 residues: Iron-sulfur cluster assembly protein CyaY (107 aa).

Belongs to the frataxin family.

Involved in iron-sulfur (Fe-S) cluster assembly. May act as a regulator of Fe-S biogenesis. In Neisseria meningitidis serogroup A / serotype 4A (strain DSM 15465 / Z2491), this protein is Iron-sulfur cluster assembly protein CyaY.